The sequence spans 66 residues: Large ribosomal subunit protein bL33c (66 aa).

It belongs to the bacterial ribosomal protein bL33 family.

The protein resides in the plastid. It is found in the chloroplast. This is Large ribosomal subunit protein bL33c from Helianthus annuus (Common sunflower).